Here is a 479-residue protein sequence, read N- to C-terminus: Sulfate adenylyltransferase subunit 1 (479 aa).

A tr-type G domain is found at 25 to 239 (KSLLRFLTCG…EVLETVDIQR (215 aa)). The interval 34 to 41 (GSVDDGKS) is G1. GTP is bound at residue 34 to 41 (GSVDDGKS). Positions 92–96 (GITID) are G2. The G3 stretch occupies residues 113–116 (DTPG). Residues 113–117 (DTPGH) and 168–171 (NKMD) contribute to the GTP site. Residues 168-171 (NKMD) are G4. The G5 stretch occupies residues 206 to 208 (SAL).

The protein belongs to the TRAFAC class translation factor GTPase superfamily. Classic translation factor GTPase family. CysN/NodQ subfamily. Heterodimer composed of CysD, the smaller subunit, and CysN.

The catalysed reaction is sulfate + ATP + H(+) = adenosine 5'-phosphosulfate + diphosphate. It functions in the pathway sulfur metabolism; hydrogen sulfide biosynthesis; sulfite from sulfate: step 1/3. With CysD forms the ATP sulfurylase (ATPS) that catalyzes the adenylation of sulfate producing adenosine 5'-phosphosulfate (APS) and diphosphate, the first enzymatic step in sulfur assimilation pathway. APS synthesis involves the formation of a high-energy phosphoric-sulfuric acid anhydride bond driven by GTP hydrolysis by CysN coupled to ATP hydrolysis by CysD. In Salmonella paratyphi B (strain ATCC BAA-1250 / SPB7), this protein is Sulfate adenylyltransferase subunit 1.